Reading from the N-terminus, the 659-residue chain is Threonine--tRNA ligase (659 aa).

In terms of domain architecture, TGS spans 3 to 64; it reads EKIRITLIDN…LEDGRLEIIT (62 aa). The catalytic stretch occupies residues 249-555; that stretch reads DHRRLGQEMD…LIEHHAGRFP (307 aa). C354, H405, and H532 together coordinate Zn(2+).

The protein belongs to the class-II aminoacyl-tRNA synthetase family. As to quaternary structure, homodimer. It depends on Zn(2+) as a cofactor.

The protein localises to the cytoplasm. It carries out the reaction tRNA(Thr) + L-threonine + ATP = L-threonyl-tRNA(Thr) + AMP + diphosphate + H(+). Catalyzes the attachment of threonine to tRNA(Thr) in a two-step reaction: L-threonine is first activated by ATP to form Thr-AMP and then transferred to the acceptor end of tRNA(Thr). Also edits incorrectly charged L-seryl-tRNA(Thr). The sequence is that of Threonine--tRNA ligase from Zymomonas mobilis subsp. mobilis (strain ATCC 31821 / ZM4 / CP4).